The sequence spans 353 residues: Guanidino acid hydrolase, mitochondrial (353 aa).

The N-terminal 33 residues, 1–33 (MLQLLKSSWVRSAGSGVVTWRASAGLFCPGTRQ), are a transit peptide targeting the mitochondrion. The disordered stretch occupies residues 29–52 (PGTRQASDTSDTLHHPSPSSESQV). Histidine 163 and histidine 188 together coordinate Mn(2+). Position 194 is an N6-acetyllysine (lysine 194). N6-acetyllysine; alternate is present on lysine 218. Lysine 218 is modified (N6-succinyllysine; alternate). Position 279 (aspartate 279) interacts with Mn(2+).

It belongs to the arginase family. Agmatinase subfamily. Mn(2+) serves as cofactor.

It localises to the mitochondrion. It catalyses the reaction 3-guanidinopropanoate + H2O = urea + beta-alanine. It carries out the reaction 4-guanidinobutanoate + H2O = urea + 4-aminobutanoate. The enzyme catalyses taurocyamine + H2O = urea + taurine. The catalysed reaction is L-arginine + H2O = urea + L-ornithine. The protein operates within nitrogen metabolism; urea cycle; L-ornithine and urea from L-arginine: step 1/1. Hydrolyzes linear guanidino acids to form urea and the corresponding amines. Displays specificity for substrates having a negatively charged head group and short chains including taurocyamine, guanidino propanoic and butanoic acids. May protect cells by detoxifying potentially harmful amounts of guanidino acids. Metabolizes L-arginine with low efficiency. This Rattus norvegicus (Rat) protein is Guanidino acid hydrolase, mitochondrial (Agmat).